Reading from the N-terminus, the 660-residue chain is Kinesin-like protein KIF2A (660 aa).

A disordered region spans residues 1 to 140 (MVTSLNEDNE…QQELREKRAQ (140 aa)). Positions 1–171 (MVTSLNEDNE…LDYRPLTTAD (171 aa)) are globular. Phosphoserine is present on Ser-48. 2 positions are modified to phosphothreonine: Thr-51 and Thr-70. Ser-73 carries the phosphoserine modification. Position 75 is an N6-acetyllysine (Lys-75). The span at 96 to 106 (LPEQSSSAQQN) shows a compositional bias: polar residues. Residues 113–140 (CVKEVEKLQEKREKRRLQQQELREKRAQ) are compositionally biased toward basic and acidic residues. The Kinesin motor domain occupies 177-507 (RICVCVRKRP…LRYANRVKEL (331 aa)). 267–274 (GQTGSGKT) is an ATP binding site. A coiled-coil region spans residues 614–653 (ATQLEAILEQKIDILTELRDKVKSFRAALQEEEQASKQIN).

Belongs to the TRAFAC class myosin-kinesin ATPase superfamily. Kinesin family. MCAK/KIF2 subfamily. Interacts with AURKA and PLK1. Interacts with PSRC1. Interacts with MCRS1; the interaction enhances recruitment of KIF2A to the minus ends of spindle microtubules which promotes chromosome alignment.

Its subcellular location is the cytoplasm. It localises to the cytoskeleton. The protein localises to the microtubule organizing center. It is found in the centrosome. The protein resides in the spindle pole. Its subcellular location is the spindle. Its function is as follows. Plus end-directed microtubule-dependent motor required for normal brain development. May regulate microtubule dynamics during axonal growth. Required for normal progression through mitosis. Required for normal congress of chromosomes at the metaphase plate. Required for normal spindle dynamics during mitosis. Promotes spindle turnover. Implicated in formation of bipolar mitotic spindles. Has microtubule depolymerization activity. This Bos taurus (Bovine) protein is Kinesin-like protein KIF2A (KIF2A).